Consider the following 327-residue polypeptide: L-lactate dehydrogenase (327 aa).

NAD(+) is bound by residues V18, D39, R44, Y69, and 83 to 84 (GL). Substrate-binding positions include Q86, R92, and 124–127 (NPVD). NAD(+) contacts are provided by residues 122–124 (AAN) and S147. 152–155 (DSAR) contacts substrate. 2 residues coordinate beta-D-fructose 1,6-bisphosphate: R157 and H172. The active-site Proton acceptor is H179. Y224 carries the phosphotyrosine modification. Residue T233 participates in substrate binding.

This sequence belongs to the LDH/MDH superfamily. LDH family. As to quaternary structure, homotetramer.

The protein localises to the cytoplasm. The enzyme catalyses (S)-lactate + NAD(+) = pyruvate + NADH + H(+). It participates in fermentation; pyruvate fermentation to lactate; (S)-lactate from pyruvate: step 1/1. Its activity is regulated as follows. Allosterically activated by fructose 1,6-bisphosphate (FBP). In terms of biological role, catalyzes the conversion of lactate to pyruvate. The chain is L-lactate dehydrogenase from Streptococcus suis (strain 98HAH33).